The chain runs to 159 residues: NADH-quinone oxidoreductase subunit I (159 aa).

2 4Fe-4S ferredoxin-type domains span residues 50–80 (QRRY…IESE) and 90–119 (KRYD…ETHI). [4Fe-4S] cluster contacts are provided by cysteine 60, cysteine 63, cysteine 66, cysteine 70, cysteine 99, cysteine 102, cysteine 105, and cysteine 109.

Belongs to the complex I 23 kDa subunit family. As to quaternary structure, NDH-1 is composed of 14 different subunits. Subunits NuoA, H, J, K, L, M, N constitute the membrane sector of the complex. The cofactor is [4Fe-4S] cluster.

The protein resides in the cell inner membrane. It catalyses the reaction a quinone + NADH + 5 H(+)(in) = a quinol + NAD(+) + 4 H(+)(out). NDH-1 shuttles electrons from NADH, via FMN and iron-sulfur (Fe-S) centers, to quinones in the respiratory chain. The immediate electron acceptor for the enzyme in this species is believed to be ubiquinone. Couples the redox reaction to proton translocation (for every two electrons transferred, four hydrogen ions are translocated across the cytoplasmic membrane), and thus conserves the redox energy in a proton gradient. The polypeptide is NADH-quinone oxidoreductase subunit I (Neisseria meningitidis serogroup A / serotype 4A (strain DSM 15465 / Z2491)).